The primary structure comprises 209 residues: Large ribosomal subunit protein uL3 (209 aa).

At Q150 the chain carries N5-methylglutamine.

It belongs to the universal ribosomal protein uL3 family. In terms of assembly, part of the 50S ribosomal subunit. Forms a cluster with proteins L14 and L19. Post-translationally, methylated by PrmB.

One of the primary rRNA binding proteins, it binds directly near the 3'-end of the 23S rRNA, where it nucleates assembly of the 50S subunit. The sequence is that of Large ribosomal subunit protein uL3 from Citrobacter koseri (strain ATCC BAA-895 / CDC 4225-83 / SGSC4696).